The sequence spans 1196 residues: DNA-directed RNA polymerase subunit beta (1196 aa).

The protein belongs to the RNA polymerase beta chain family. In terms of assembly, the RNAP catalytic core consists of 2 alpha, 1 beta, 1 beta' and 1 omega subunit. When a sigma factor is associated with the core the holoenzyme is formed, which can initiate transcription.

It catalyses the reaction RNA(n) + a ribonucleoside 5'-triphosphate = RNA(n+1) + diphosphate. Its function is as follows. DNA-dependent RNA polymerase catalyzes the transcription of DNA into RNA using the four ribonucleoside triphosphates as substrates. The polypeptide is DNA-directed RNA polymerase subunit beta (Lactococcus lactis subsp. cremoris (strain SK11)).